The sequence spans 369 residues: Phospho-N-acetylmuramoyl-pentapeptide-transferase (369 aa).

10 helical membrane-spanning segments follow: residues 2–22 (IPLL…TQLF), 55–75 (AVVI…SWWI), 82–102 (PSVS…VGFL), 120–140 (AKLI…INFA), 163–183 (LAFA…NLII), 196–216 (LDGL…LIGI), 240–260 (PLDL…FLWW), 267–287 (IFMG…FAIL), 292–312 (ILLA…ILQV), and 349–369 (ILGG…WVVF).

Belongs to the glycosyltransferase 4 family. MraY subfamily. Requires Mg(2+) as cofactor.

Its subcellular location is the cell membrane. It carries out the reaction UDP-N-acetyl-alpha-D-muramoyl-L-alanyl-gamma-D-glutamyl-meso-2,6-diaminopimeloyl-D-alanyl-D-alanine + di-trans,octa-cis-undecaprenyl phosphate = di-trans,octa-cis-undecaprenyl diphospho-N-acetyl-alpha-D-muramoyl-L-alanyl-D-glutamyl-meso-2,6-diaminopimeloyl-D-alanyl-D-alanine + UMP. It functions in the pathway cell wall biogenesis; peptidoglycan biosynthesis. Catalyzes the initial step of the lipid cycle reactions in the biosynthesis of the cell wall peptidoglycan: transfers peptidoglycan precursor phospho-MurNAc-pentapeptide from UDP-MurNAc-pentapeptide onto the lipid carrier undecaprenyl phosphate, yielding undecaprenyl-pyrophosphoryl-MurNAc-pentapeptide, known as lipid I. The chain is Phospho-N-acetylmuramoyl-pentapeptide-transferase from Renibacterium salmoninarum (strain ATCC 33209 / DSM 20767 / JCM 11484 / NBRC 15589 / NCIMB 2235).